Consider the following 121-residue polypeptide: Small ribosomal subunit protein uS13 (121 aa).

A disordered region spans residues His91–Lys121.

The protein belongs to the universal ribosomal protein uS13 family. Part of the 30S ribosomal subunit. Forms a loose heterodimer with protein S19. Forms two bridges to the 50S subunit in the 70S ribosome.

Functionally, located at the top of the head of the 30S subunit, it contacts several helices of the 16S rRNA. In the 70S ribosome it contacts the 23S rRNA (bridge B1a) and protein L5 of the 50S subunit (bridge B1b), connecting the 2 subunits; these bridges are implicated in subunit movement. Contacts the tRNAs in the A and P-sites. The chain is Small ribosomal subunit protein uS13 from Cupriavidus pinatubonensis (strain JMP 134 / LMG 1197) (Cupriavidus necator (strain JMP 134)).